The following is a 522-amino-acid chain: Mediator of RNA polymerase II transcription subunit 1.2 (522 aa).

Positions 13–40 (LLEQRKNQELNIEHIDEEMRLEQVRQAA) form a coiled coil.

It belongs to the Mediator complex subunit 1 family. In terms of assembly, component of the Mediator complex.

It localises to the nucleus. In terms of biological role, component of the Mediator complex, a coactivator involved in the regulated transcription of nearly all RNA polymerase II-dependent genes. Mediator functions as a bridge to convey information from gene-specific regulatory proteins to the basal RNA polymerase II transcription machinery. Mediator is recruited to promoters by direct interactions with regulatory proteins and serves as a scaffold for the assembly of a functional preinitiation complex with RNA polymerase II and the general transcription factors. In Caenorhabditis elegans, this protein is Mediator of RNA polymerase II transcription subunit 1.2 (mdt-1.2).